Reading from the N-terminus, the 111-residue chain is uncharacterized protein (111 aa).

4 helical membrane-spanning segments follow: residues 4 to 21 (FITA…FVSF), 28 to 47 (LVYF…YMIY), 51 to 73 (TGIR…VTAF), and 80 to 102 (SFFF…YLGM).

It localises to the cell membrane. This is an uncharacterized protein from Bacillus subtilis (strain 168).